Reading from the N-terminus, the 442-residue chain is Protein phosphatase 2C 3 (442 aa).

The segment at 30 to 100 (RFRMSPSEMN…VSISDGNSSV (71 aa)) is disordered. Positions 79–90 (PEEESVSLEDSD) are enriched in acidic residues. The PPM-type phosphatase domain occupies 120 to 433 (RYGVASVCGR…DNVSVVVIDL (314 aa)). Residues Asp162, Gly163, and Asp339 each contribute to the Mn(2+) site. Positions 363 to 401 (GRGRRRGETQTPGRRSEEEGKEEEEKVVGSRKNGKRGEI) are disordered. Over residues 376–390 (RRSEEEGKEEEEKVV) the composition is skewed to basic and acidic residues. A Mn(2+)-binding site is contributed by Asp424.

Belongs to the PP2C family. As to quaternary structure, part of a K(+)-channel calcium-sensing kinase/phosphatase complex composed by a calcium sensor CBL (CBL1, CBL2, CBL3 or CBL9), a kinase CIPK (CIPK6, CIPK16 or CIPK23), a phosphatase PP2C (AIP1) and a K(+)-channel (AKT1). Interacts with AKT1 and CIPK23. Interacts with PYL8/RCAR3 in an abscisic acid-independent. Interacts with PYR1/RCAR11 in an abscisic acid-dependent manner. Mg(2+) is required as a cofactor. Requires Mn(2+) as cofactor. As to expression, expressed in shoot meristem, vascular tissues of cotyledons, and in primary roots surrounding the root meristem. Highly expressed in seeds.

It is found in the cell membrane. The protein localises to the cytoplasm. It localises to the nucleus. The catalysed reaction is O-phospho-L-seryl-[protein] + H2O = L-seryl-[protein] + phosphate. It catalyses the reaction O-phospho-L-threonyl-[protein] + H2O = L-threonyl-[protein] + phosphate. Involved in the negative regulation of the K(+) potassium channel AKT1 by its dephosphorylation, antagonistically to CIPK proteins (e.g. CIPK23). Functions as a positive regulator of abscisic acid-mediated cell signaling during seedling growth. Involved in the regulation of seed dormancy. Acts as a negative regulator of seed dormancy by inhibiting abscisic signaling and subsequently activating gibberellic acid signaling. This Arabidopsis thaliana (Mouse-ear cress) protein is Protein phosphatase 2C 3.